A 61-amino-acid chain; its full sequence is Small ribosomal subunit protein uS14B (61 aa).

The Zn(2+) site is built by C24, C27, C40, and C43.

This sequence belongs to the universal ribosomal protein uS14 family. Zinc-binding uS14 subfamily. In terms of assembly, part of the 30S ribosomal subunit. Contacts proteins S3 and S10. Requires Zn(2+) as cofactor.

Binds 16S rRNA, required for the assembly of 30S particles and may also be responsible for determining the conformation of the 16S rRNA at the A site. The protein is Small ribosomal subunit protein uS14B of Pediococcus pentosaceus (strain ATCC 25745 / CCUG 21536 / LMG 10740 / 183-1w).